Consider the following 217-residue polypeptide: Regulator of G-protein signaling 19 (217 aa).

Residues 1–29 (MPTPHEAEKQITGPEEADRPPSMSSHDTA) form a disordered region. Phosphoserine occurs at positions 24 and 97. The RGS domain occupies 90 to 206 (SFDKLMHSPA…LSSPTYRALL (117 aa)). Serine 151 bears the Phosphoserine; by MAPK1 and MAPK3 mark. The interval 207–217 (LQGPSQSSSEA) is interaction with GIPC.

As to quaternary structure, interacts with GIPC PDZ domain. Interacts with GNAO1. Post-translationally, fatty acylated. Heavily palmitoylated in the cysteine string motif. Phosphorylated, mainly on serine residues. In terms of tissue distribution, highest expression in lung. Placenta, liver and heart also express high levels of GAIP.

The protein resides in the membrane. In terms of biological role, inhibits signal transduction by increasing the GTPase activity of G protein alpha subunits thereby driving them into their inactive GDP-bound form. Binds to G-alpha subfamily 1 members, with the order G(i)a3 &gt; G(i)a1 &gt; G(o)a &gt;&gt; G(z)a/G(i)a2. Activity on G(z)-alpha is inhibited by phosphorylation and palmitoylation of the G-protein. The chain is Regulator of G-protein signaling 19 (RGS19) from Homo sapiens (Human).